A 1191-amino-acid polypeptide reads, in one-letter code: DNA topoisomerase 2 (1191 aa).

ATP is bound by residues Asn-64, Asn-95, and 142–149 (GTNGVGLK). Residues Glu-437, Asp-538, and Asp-540 each coordinate Mg(2+). A Topo IIA-type catalytic domain is found at 706 to 1173 (IPNFLDGMTR…PGASVWLEEI (468 aa)). The O-(5'-phospho-DNA)-tyrosine intermediate role is filled by Tyr-799.

The protein belongs to the type II topoisomerase family. Requires Mg(2+) as cofactor. The cofactor is Mn(2+). Ca(2+) serves as cofactor.

The protein localises to the host cytoplasm. It carries out the reaction ATP-dependent breakage, passage and rejoining of double-stranded DNA.. Its function is as follows. Type II topoisomerase. Processively relaxes supercoiled DNA. Displays DNA-supercoiling activity only when associated with the viral histone-like protein. In Ornithodoros (relapsing fever ticks), this protein is DNA topoisomerase 2.